The sequence spans 88 residues: Small ribosomal subunit protein bS20 (88 aa).

The protein belongs to the bacterial ribosomal protein bS20 family.

Binds directly to 16S ribosomal RNA. The chain is Small ribosomal subunit protein bS20 from Clostridium botulinum (strain ATCC 19397 / Type A).